We begin with the raw amino-acid sequence, 247 residues long: 2,3-bisphosphoglycerate-dependent phosphoglycerate mutase (247 aa).

Substrate contacts are provided by residues 8–15 (RHGESQWN), 21–22 (TG), arginine 60, 87–90 (ERHY), lysine 98, 114–115 (RR), and 183–184 (GN). The active-site Tele-phosphohistidine intermediate is the histidine 9. The active-site Proton donor/acceptor is glutamate 87.

Belongs to the phosphoglycerate mutase family. BPG-dependent PGAM subfamily.

It carries out the reaction (2R)-2-phosphoglycerate = (2R)-3-phosphoglycerate. It functions in the pathway carbohydrate degradation; glycolysis; pyruvate from D-glyceraldehyde 3-phosphate: step 3/5. Functionally, catalyzes the interconversion of 2-phosphoglycerate and 3-phosphoglycerate. This Chlorobaculum tepidum (strain ATCC 49652 / DSM 12025 / NBRC 103806 / TLS) (Chlorobium tepidum) protein is 2,3-bisphosphoglycerate-dependent phosphoglycerate mutase.